Reading from the N-terminus, the 122-residue chain is Large ribosomal subunit protein uL14 (122 aa).

The protein belongs to the universal ribosomal protein uL14 family. In terms of assembly, part of the 50S ribosomal subunit. Forms a cluster with proteins L3 and L19. In the 70S ribosome, L14 and L19 interact and together make contacts with the 16S rRNA in bridges B5 and B8.

Its function is as follows. Binds to 23S rRNA. Forms part of two intersubunit bridges in the 70S ribosome. The protein is Large ribosomal subunit protein uL14 of Chlamydia muridarum (strain MoPn / Nigg).